Here is a 548-residue protein sequence, read N- to C-terminus: Chaperonin GroEL (548 aa).

Residues 30 to 33, K51, 87 to 91, G415, 479 to 481, and D495 each bind ATP; these read TLGP, DGTTT, and NAA.

The protein belongs to the chaperonin (HSP60) family. Forms a cylinder of 14 subunits composed of two heptameric rings stacked back-to-back. Interacts with the co-chaperonin GroES. UMPylated on a tyrosine residue by YdiU under ATP-limited conditions.

Its subcellular location is the cytoplasm. The catalysed reaction is ATP + H2O + a folded polypeptide = ADP + phosphate + an unfolded polypeptide.. With respect to regulation, UMPylation of the chaperone by YdiU negatively regulates its activity, facilitating Salmonella survival under ATP-limited conditions. In terms of biological role, together with its co-chaperonin GroES, plays an essential role in assisting protein folding. The GroEL-GroES system forms a nano-cage that allows encapsulation of the non-native substrate proteins and provides a physical environment optimized to promote and accelerate protein folding. This Salmonella typhimurium (strain LT2 / SGSC1412 / ATCC 700720) protein is Chaperonin GroEL.